The following is a 410-amino-acid chain: Lipoyl synthase, mitochondrial (410 aa).

Cys125, Cys130, Cys136, Cys157, Cys161, Cys164, and Ser373 together coordinate [4Fe-4S] cluster. The Radical SAM core domain occupies 140–362; the sequence is SDEEGTATAT…EKEAMDMGFL (223 aa).

This sequence belongs to the radical SAM superfamily. Lipoyl synthase family. Requires [4Fe-4S] cluster as cofactor.

The protein resides in the mitochondrion. The catalysed reaction is [[Fe-S] cluster scaffold protein carrying a second [4Fe-4S](2+) cluster] + N(6)-octanoyl-L-lysyl-[protein] + 2 oxidized [2Fe-2S]-[ferredoxin] + 2 S-adenosyl-L-methionine + 4 H(+) = [[Fe-S] cluster scaffold protein] + N(6)-[(R)-dihydrolipoyl]-L-lysyl-[protein] + 4 Fe(3+) + 2 hydrogen sulfide + 2 5'-deoxyadenosine + 2 L-methionine + 2 reduced [2Fe-2S]-[ferredoxin]. It participates in protein modification; protein lipoylation via endogenous pathway; protein N(6)-(lipoyl)lysine from octanoyl-[acyl-carrier-protein]: step 2/2. Catalyzes the radical-mediated insertion of two sulfur atoms into the C-6 and C-8 positions of the octanoyl moiety bound to the lipoyl domains of lipoate-dependent enzymes, thereby converting the octanoylated domains into lipoylated derivatives. The polypeptide is Lipoyl synthase, mitochondrial (Leishmania major).